We begin with the raw amino-acid sequence, 498 residues long: Polygalacturonan/rhamnogalacturonan-binding protein YtcQ (498 aa).

A signal peptide spans 1–22 (MGNKWRVLLIVLVLALGGVLAG). A lipid anchor (N-palmitoyl cysteine) is attached at Cys23. Cys23 carries the S-diacylglycerol cysteine lipid modification.

It belongs to the bacterial solute-binding protein 1 family. In terms of assembly, the complex is probably composed of two ATP-binding proteins (MsmX), two transmembrane proteins (YtcP and YteP) and a solute-binding protein (YtcQ).

The protein resides in the cell membrane. Its function is as follows. Involved in pectin degradation. Part of the ABC transporter complex YtcQP-YteP involved in the uptake of polygalacturonan and rhamnogalacturonan type I. This Bacillus subtilis (strain 168) protein is Polygalacturonan/rhamnogalacturonan-binding protein YtcQ (ytcQ).